A 125-amino-acid polypeptide reads, in one-letter code: MPTFNQLIRHGREEKRRTDRTRALDKCPQKTGVCLRVSTRTPKKPNSALRKIAKVRLSNRHDIFAYIPGEGHNLQEHSTVLIRGGRVKDLPGVKFHCIRGVKDLMGIPGRRRGRSKYGAEKPKSI.

The protein belongs to the universal ribosomal protein uS12 family. As to quaternary structure, component of the mitochondrial ribosome small subunit.

It is found in the mitochondrion. Its function is as follows. Protein S12 is involved in the translation initiation step. The polypeptide is Small ribosomal subunit protein uS12m (RPS12) (Arabidopsis thaliana (Mouse-ear cress)).